A 140-amino-acid polypeptide reads, in one-letter code: Profilin-1 (140 aa).

At alanine 2 the chain carries N-acetylalanine. Serine 28 is subject to Phosphoserine. Residue lysine 54 forms a Glycyl lysine isopeptide (Lys-Gly) (interchain with G-Cter in SUMO2); alternate linkage. Residue lysine 54 forms a Glycyl lysine isopeptide (Lys-Gly) (interchain with G-Cter in ubiquitin); alternate linkage. A phosphoserine mark is found at serine 57 and serine 85. 2 positions are modified to N6-acetyllysine: lysine 105 and lysine 108. The residue at position 129 (tyrosine 129) is a Phosphotyrosine. The residue at position 138 (serine 138) is a Phosphoserine; by ROCK1.

This sequence belongs to the profilin family. As to quaternary structure, found in a complex with XPO6, Ran, ACTB and PFN1. Interacts with ACTB. Interacts with VASP. Interacts with HTT. Interacts with SH3BGRL. Occurs in many kinds of cells as a complex with monomeric actin in a 1:1 ratio. Interacts with ACTMAP. Phosphorylation at Ser-138 reduces its affinity for G-actin and blocks its interaction with HTT, reducing its ability to inhibit androgen receptor (AR) and HTT aggregation. As to expression, expressed in epididymis (at protein level).

It localises to the cytoplasm. It is found in the cytoskeleton. Its function is as follows. Binds to actin and affects the structure of the cytoskeleton. At high concentrations, profilin prevents the polymerization of actin, whereas it enhances it at low concentrations. By binding to PIP2, it inhibits the formation of IP3 and DG. Inhibits androgen receptor (AR) and HTT aggregation and binding of G-actin is essential for its inhibition of AR. This Homo sapiens (Human) protein is Profilin-1 (PFN1).